We begin with the raw amino-acid sequence, 196 residues long: Recombination protein RecR (196 aa).

Residues 55-70 (CELCGNLESESPCSIC) form a C4-type zinc finger. Residues 78–173 (DIVCVVEEIT…KLSFLAHGIP (96 aa)) enclose the Toprim domain.

It belongs to the RecR family.

Its function is as follows. May play a role in DNA repair. It seems to be involved in an RecBC-independent recombinational process of DNA repair. It may act with RecF and RecO. This Neorickettsia sennetsu (strain ATCC VR-367 / Miyayama) (Ehrlichia sennetsu) protein is Recombination protein RecR.